Consider the following 568-residue polypeptide: Methionine--tRNA ligase (568 aa).

A 'HIGH' region motif is present at residues 10–20 (PYVQSVPHLGN). Zn(2+) is bound by residues Cys143, Cys146, Cys156, and Cys159. The 'KMSKS' region motif lies at 333 to 337 (KFSKS). Lys336 contributes to the ATP binding site.

This sequence belongs to the class-I aminoacyl-tRNA synthetase family. MetG type 1 subfamily. Zn(2+) is required as a cofactor.

The protein localises to the cytoplasm. It catalyses the reaction tRNA(Met) + L-methionine + ATP = L-methionyl-tRNA(Met) + AMP + diphosphate. Is required not only for elongation of protein synthesis but also for the initiation of all mRNA translation through initiator tRNA(fMet) aminoacylation. The chain is Methionine--tRNA ligase from Metallosphaera sedula (strain ATCC 51363 / DSM 5348 / JCM 9185 / NBRC 15509 / TH2).